Consider the following 426-residue polypeptide: Serine/threonine-protein kinase SRPK (426 aa).

Basic and acidic residues predominate over residues Met1–Asp23. The disordered stretch occupies residues Met1–Lys40. Acidic residues predominate over residues Ser24 to Thr35. A Protein kinase domain is found at Tyr56 to Met419. ATP is bound by residues Leu62 to Val70 and Lys86. The active-site Proton acceptor is the Asp188. The Nuclear localization signal motif lies at Pro318–Asp328.

This sequence belongs to the protein kinase superfamily. CMGC Ser/Thr protein kinase family.

The protein localises to the nucleus. The enzyme catalyses L-seryl-[protein] + ATP = O-phospho-L-seryl-[protein] + ADP + H(+). It catalyses the reaction L-threonyl-[protein] + ATP = O-phospho-L-threonyl-[protein] + ADP + H(+). Its function is as follows. Phosphorylates serine/arginine-rich protein PSR. The protein is Serine/threonine-protein kinase SRPK of Physarum polycephalum (Slime mold).